An 830-amino-acid chain; its full sequence is WD repeat-containing protein 75 (830 aa).

WD repeat units follow at residues 4 to 43, 47 to 86, 90 to 131, 145 to 184, 193 to 231, 237 to 276, 279 to 318, 324 to 362, and 376 to 423; these read EENI…KVYS, EECV…KLWD, GILI…QLVS, KELS…YFFK, LSSS…RLWR, KKYT…VEWR, TEKN…IIIH, SAVI…QFYS, and QQEY…KLWM. Residue K123 forms a Glycyl lysine isopeptide (Lys-Gly) (interchain with G-Cter in SUMO2) linkage. Residue K427 forms a Glycyl lysine isopeptide (Lys-Gly) (interchain with G-Cter in SUMO2) linkage. 4 WD repeats span residues 430-474, 487-525, 529-569, and 574-611; these read GFIL…KVWI, GWTC…TIWD, WELK…CCWN, and ALEW…FVFK. K466 carries the N6-acetyllysine modification. A phosphoserine mark is found at S664 and S672. K676 is covalently cross-linked (Glycyl lysine isopeptide (Lys-Gly) (interchain with G-Cter in SUMO2)). The interval 763 to 806 is disordered; it reads SAKEIPEDVDMEEEKESEDSDEENDFTEKVQDTSNTGLGEDIIH. Acidic residues predominate over residues 769 to 787; it reads EDVDMEEEKESEDSDEEND. A phosphoserine mark is found at S779, S782, S796, and S811.

Component of the proposed t-UTP subcomplex of the ribosomal small subunit (SSU) processome. SSU processome is composed of more than 70 proteins and the RNA chaperone small nucleolar RNA (snoRNA) U3.

It localises to the nucleus. Its subcellular location is the nucleolus. Functionally, ribosome biogenesis factor. Part of the small subunit (SSU) processome, first precursor of the small eukaryotic ribosomal subunit. During the assembly of the SSU processome in the nucleolus, many ribosome biogenesis factors, an RNA chaperone and ribosomal proteins associate with the nascent pre-rRNA and work in concert to generate RNA folding, modifications, rearrangements and cleavage as well as targeted degradation of pre-ribosomal RNA by the RNA exosome. Involved in nucleolar processing of pre-18S ribosomal RNA. Required for optimal pre-ribosomal RNA transcription by RNA polymerase I. The polypeptide is WD repeat-containing protein 75 (Homo sapiens (Human)).